The primary structure comprises 376 residues: Lateral eye opsin (376 aa).

Residues 1 to 46 lie on the Extracellular side of the membrane; it reads MANQLSYSSLGWPYQPNASVVDTMPKEMLYMIHEHWYAFPPMNPLW. An N-linked (GlcNAc...) asparagine glycan is attached at Asn-17. The chain crosses the membrane as a helical span at residues 47 to 71; it reads YSILGVAMIILGIICVLGNGMVIYL. Topologically, residues 72 to 83 are cytoplasmic; that stretch reads MMTTKSLRTPTN. The helical transmembrane segment at 84-108 threads the bilayer; it reads LLVVNLAFSDFCMMAFMMPTMTSNC. Over 109 to 123 the chain is Extracellular; that stretch reads FAETWILGPFMCEVY. Cys-120 and Cys-197 form a disulfide bridge. The chain crosses the membrane as a helical span at residues 124-143; it reads GMAGSLFGCASIWSMVMITL. The Cytoplasmic portion of the chain corresponds to 144-162; that stretch reads DRYNVIVRGMAAAPLTHKK. A helical membrane pass occupies residues 163–186; sequence ATLLLLFVWIWSGGWTILPFFGWS. Topologically, residues 187–210 are extracellular; sequence RYVPEGNLTSCTVDYLTKDWSSAS. Residue Asn-193 is glycosylated (N-linked (GlcNAc...) asparagine). The helical transmembrane segment at 211–238 threads the bilayer; that stretch reads YVVIYGLAVYFLPLITMIYCYFFIVHAV. Topologically, residues 239–274 are cytoplasmic; the sequence is AEHEKQLREQAKKMNVASLRANADQQKQSAECRLAK. The chain crosses the membrane as a helical span at residues 275-298; that stretch reads VAMMTVGLWFMAWTPYLIISWAGV. The Extracellular portion of the chain corresponds to 299–306; sequence FSSGTRLT. A helical transmembrane segment spans residues 307–331; it reads PLATIWGSVFAKANSCYNPIVYGIS. Position 318 is an N6-(retinylidene)lysine (Lys-318). Over 332-376 the chain is Cytoplasmic; that stretch reads HPRYKAALYQRFPSLACGSGESGSDVKSEASATTTMEEKPKIPEA. Residues 349 to 376 are disordered; the sequence is GSGESGSDVKSEASATTTMEEKPKIPEA. The segment covering 367–376 has biased composition (basic and acidic residues); the sequence is MEEKPKIPEA.

The protein belongs to the G-protein coupled receptor 1 family. Opsin subfamily. In terms of processing, phosphorylated on some or all of the serine and threonine residues present in the C-terminal region. Lateral eye.

It is found in the membrane. Functionally, visual pigments are the light-absorbing molecules that mediate vision. They consist of an apoprotein, opsin, covalently linked to cis-retinal. This Limulus polyphemus (Atlantic horseshoe crab) protein is Lateral eye opsin.